We begin with the raw amino-acid sequence, 481 residues long: UDP-N-acetylmuramoyl-L-alanyl-D-glutamate--L-lysine ligase (481 aa).

Residue serine 42 coordinates UDP-N-acetyl-alpha-D-muramoyl-L-alanyl-D-glutamate. ATP is bound at residue 118–124 (GTKGKTT). UDP-N-acetyl-alpha-D-muramoyl-L-alanyl-D-glutamate-binding positions include glutamine 158, 160–161 (TT), serine 187, and arginine 195. Position 229 is an N6-carboxylysine (lysine 229). The L-lysine recognition motif signature appears at 404–407 (DDPN).

This sequence belongs to the MurCDEF family. MurE subfamily. Carboxylation is probably crucial for Mg(2+) binding and, consequently, for the gamma-phosphate positioning of ATP.

The protein localises to the cytoplasm. The catalysed reaction is UDP-N-acetyl-alpha-D-muramoyl-L-alanyl-D-glutamate + L-lysine + ATP = UDP-N-acetyl-alpha-D-muramoyl-L-alanyl-gamma-D-glutamyl-L-lysine + ADP + phosphate + H(+). It functions in the pathway cell wall biogenesis; peptidoglycan biosynthesis. Catalyzes the addition of L-lysine to the nucleotide precursor UDP-N-acetylmuramoyl-L-alanyl-D-glutamate (UMAG) in the biosynthesis of bacterial cell-wall peptidoglycan. The chain is UDP-N-acetylmuramoyl-L-alanyl-D-glutamate--L-lysine ligase from Streptococcus pyogenes serotype M28 (strain MGAS6180).